The primary structure comprises 340 residues: Phenylalanine--tRNA ligase alpha subunit (340 aa).

Residue E255 participates in Mg(2+) binding.

Belongs to the class-II aminoacyl-tRNA synthetase family. Phe-tRNA synthetase alpha subunit type 1 subfamily. In terms of assembly, tetramer of two alpha and two beta subunits. Mg(2+) serves as cofactor.

It localises to the cytoplasm. The catalysed reaction is tRNA(Phe) + L-phenylalanine + ATP = L-phenylalanyl-tRNA(Phe) + AMP + diphosphate + H(+). This Exiguobacterium sibiricum (strain DSM 17290 / CCUG 55495 / CIP 109462 / JCM 13490 / 255-15) protein is Phenylalanine--tRNA ligase alpha subunit.